The following is a 269-amino-acid chain: tRNA uridine(34) hydroxylase (269 aa).

One can recognise a Rhodanese domain in the interval 121–214 (SQPDVLVIDT…YLERTHNKNG (94 aa)). The active-site Cysteine persulfide intermediate is the C174.

Belongs to the TrhO family.

It carries out the reaction uridine(34) in tRNA + AH2 + O2 = 5-hydroxyuridine(34) in tRNA + A + H2O. In terms of biological role, catalyzes oxygen-dependent 5-hydroxyuridine (ho5U) modification at position 34 in tRNAs. This Wolbachia sp. subsp. Brugia malayi (strain TRS) protein is tRNA uridine(34) hydroxylase.